Here is a 136-residue protein sequence, read N- to C-terminus: Large-conductance mechanosensitive channel (136 aa).

The next 2 membrane-spanning stretches (helical) occupy residues 9-29 (AFAS…GAAF) and 79-99 (IQTI…LKAI).

The protein belongs to the MscL family. As to quaternary structure, homopentamer.

The protein localises to the cell inner membrane. In terms of biological role, channel that opens in response to stretch forces in the membrane lipid bilayer. May participate in the regulation of osmotic pressure changes within the cell. This chain is Large-conductance mechanosensitive channel, found in Shewanella sp. (strain ANA-3).